Reading from the N-terminus, the 459-residue chain is Protein BTN1 (459 aa).

11 consecutive transmembrane segments (helical) span residues valine 37 to valine 57, alanine 73 to isoleucine 93, isoleucine 102 to glutamate 122, leucine 129 to leucine 149, glycine 167 to valine 187, glycine 189 to leucine 209, valine 240 to alanine 260, alanine 283 to asparagine 303, tyrosine 325 to serine 342, leucine 352 to leucine 372, and phenylalanine 374 to alanine 394.

It belongs to the battenin family.

It is found in the vacuole membrane. Functionally, involved in vacuolar transport and vacuole pH homeostasis. Also required for cytokinesis. This Chaetomium globosum (strain ATCC 6205 / CBS 148.51 / DSM 1962 / NBRC 6347 / NRRL 1970) (Soil fungus) protein is Protein BTN1 (BTN1).